A 750-amino-acid polypeptide reads, in one-letter code: Photosystem I P700 chlorophyll a apoprotein A1 (750 aa).

The next 8 helical transmembrane spans lie at 70–93, 156–179, 195–219, 291–309, 346–369, 385–411, 433–455, and 531–549; these read VFSAHFGQLAIIFIWLSGMYFHGA, LYSTAIGGLIFAALMLFAGWFHYH, LNHHLAGLLGLGSLAWAGHQVHVSL, TAHHHLAIAVVFLVAGHMY, WHAQLALNLAMLGSLTIIVAHHMY, LSLFTHHMWIGGFTIVGAAAHAAIFMV, AIISHLNWACIFLGFHSFGLYIH, and FLVHHIHAFTIHVTVLILL. [4Fe-4S] cluster is bound by residues Cys-573 and Cys-582. 2 helical membrane passes run 589-610 and 664-686; these read HVFLGLFWMYNAISVVIFHFSW and LSAYGLLFLGAHFVWAFSLMFLF. His-675 is a chlorophyll a' binding site. The chlorophyll a site is built by Met-683 and Tyr-691. Trp-692 is a phylloquinone binding site. Residues 724 to 744 traverse the membrane as a helical segment; the sequence is AVGVAHYLLGGIATTWAFFLA.

The protein belongs to the PsaA/PsaB family. As to quaternary structure, the PsaA/B heterodimer binds the P700 chlorophyll special pair and subsequent electron acceptors. PSI consists of a core antenna complex that captures photons, and an electron transfer chain that converts photonic excitation into a charge separation. The eukaryotic PSI reaction center is composed of at least 11 subunits. The cofactor is P700 is a chlorophyll a/chlorophyll a' dimer, A0 is one or more chlorophyll a, A1 is one or both phylloquinones and FX is a shared 4Fe-4S iron-sulfur center..

The protein resides in the plastid. It is found in the chloroplast thylakoid membrane. The catalysed reaction is reduced [plastocyanin] + hnu + oxidized [2Fe-2S]-[ferredoxin] = oxidized [plastocyanin] + reduced [2Fe-2S]-[ferredoxin]. Functionally, psaA and PsaB bind P700, the primary electron donor of photosystem I (PSI), as well as the electron acceptors A0, A1 and FX. PSI is a plastocyanin-ferredoxin oxidoreductase, converting photonic excitation into a charge separation, which transfers an electron from the donor P700 chlorophyll pair to the spectroscopically characterized acceptors A0, A1, FX, FA and FB in turn. Oxidized P700 is reduced on the lumenal side of the thylakoid membrane by plastocyanin. The chain is Photosystem I P700 chlorophyll a apoprotein A1 from Anthoceros angustus (Hornwort).